The primary structure comprises 356 residues: Butyrate kinase (356 aa).

This sequence belongs to the acetokinase family.

Its subcellular location is the cytoplasm. It carries out the reaction butanoate + ATP = butanoyl phosphate + ADP. It participates in lipid metabolism; butanoate metabolism. Functionally, catalyzes the conversion of butyryl-CoA through butyryl phosphate to butyrate. In Clostridium tetani (strain Massachusetts / E88), this protein is Butyrate kinase.